The sequence spans 310 residues: 5'-adenylylsulfate reductase-like 4 (310 aa).

The signal sequence occupies residues 1–22; sequence MEKEILLLLLVIMFLTVADVDA. The Thioredoxin domain occupies 49–168; the sequence is GVESDERPRF…LVAFYSDVTG (120 aa). 2 N-linked (GlcNAc...) asparagine glycosylation sites follow: Asn-143 and Asn-190. The helical transmembrane segment at 217–237 threads the bilayer; that stretch reads LAIVFVLLRLLHLIYPTLVVF.

The protein resides in the membrane. The chain is 5'-adenylylsulfate reductase-like 4 (APRL4) from Arabidopsis thaliana (Mouse-ear cress).